The sequence spans 195 residues: Nicotinamide riboside kinase 1 (195 aa).

ATP is bound at residue 10–18; that stretch reads GVTNGGKTT. Mg(2+)-binding residues include Thr-17 and Asp-36. Catalysis depends on Asp-36, which acts as the Proton acceptor. Substrate contacts are provided by residues 36 to 39 and 55 to 56; these read DDFF and YD. Position 128 (Arg-128) interacts with ATP. Substrate contacts are provided by residues Arg-129 and 134-135; that span reads YE. ATP-binding positions include 132–134 and 172–174; these read RVY and RSE.

It belongs to the uridine kinase family. NRK subfamily. Monomer.

It catalyses the reaction beta-nicotinamide D-riboside + ATP = beta-nicotinamide D-ribonucleotide + ADP + H(+). The enzyme catalyses beta-D-ribosylnicotinate + ATP = nicotinate beta-D-ribonucleotide + ADP + H(+). The protein operates within cofactor biosynthesis; NAD(+) biosynthesis. Catalyzes the phosphorylation of nicotinamide riboside (NR) and nicotinic acid riboside (NaR) to form nicotinamide mononucleotide (NMN) and nicotinic acid mononucleotide (NaMN). This Mus musculus (Mouse) protein is Nicotinamide riboside kinase 1 (Nmrk1).